Consider the following 215-residue polypeptide: Probable phosphoglycerate mutase GpmB (215 aa).

Substrate-binding positions include 8–15 (RHGETQWN), 21–22 (QG), R58, K60, 82–85 (ELDM), 104–105 (RR), and 151–152 (GI). H9 functions as the Tele-phosphohistidine intermediate in the catalytic mechanism. E82 functions as the Proton donor/acceptor in the catalytic mechanism.

This sequence belongs to the phosphoglycerate mutase family. GpmB subfamily.

It carries out the reaction (2R)-2-phosphoglycerate = (2R)-3-phosphoglycerate. It participates in carbohydrate degradation; glycolysis; pyruvate from D-glyceraldehyde 3-phosphate: step 3/5. This is Probable phosphoglycerate mutase GpmB from Salmonella paratyphi A (strain AKU_12601).